The following is a 207-amino-acid chain: Small ribosomal subunit protein uS4c (207 aa).

The region spanning 92-153 is the S4 RNA-binding domain; that stretch reads MRLDNILFRL…PKTYQSILSK (62 aa).

Belongs to the universal ribosomal protein uS4 family. In terms of assembly, part of the 30S ribosomal subunit. Contacts protein S5. The interaction surface between S4 and S5 is involved in control of translational fidelity.

The protein localises to the plastid. Its subcellular location is the chloroplast. In terms of biological role, one of the primary rRNA binding proteins, it binds directly to 16S rRNA where it nucleates assembly of the body of the 30S subunit. With S5 and S12 plays an important role in translational accuracy. The sequence is that of Small ribosomal subunit protein uS4c (rps4) from Equisetum laevigatum (Smooth horsetail).